The following is a 347-amino-acid chain: GMP reductase (347 aa).

108 to 131 (ADFQKTKDIMALTDDLIFICIDIA) provides a ligand contact to NADP(+). K(+) contacts are provided by Gly-181 and Gly-183. The Thioimidate intermediate role is filled by Cys-186. 216–239 (IIGDGGCSCAGDVSKAFGGGADFV) is a binding site for NADP(+).

This sequence belongs to the IMPDH/GMPR family. GuaC type 1 subfamily. As to quaternary structure, homotetramer.

The enzyme catalyses IMP + NH4(+) + NADP(+) = GMP + NADPH + 2 H(+). In terms of biological role, catalyzes the irreversible NADPH-dependent deamination of GMP to IMP. It functions in the conversion of nucleobase, nucleoside and nucleotide derivatives of G to A nucleotides, and in maintaining the intracellular balance of A and G nucleotides. In Aliivibrio fischeri (strain MJ11) (Vibrio fischeri), this protein is GMP reductase.